The sequence spans 305 residues: MNQLELYIDTFVEYLQIEKNASPYTVKYYRNDLEIFADFLRSEGLSHIANVTYKDVRIFLTSLYEQELSRRSVSRKISTLRSFYRFLEREGYVEGNPFVQLHLPKTSKPVPGFLYQEELDKLFEVNDITTPLGQRDQALLEMLYGTGIRVSECQNLRLQDIDFAIGTIFVRGKGRKERYVPFGSFAEIALETYLQEGRTKLLEKSNSDTEFIFLNSRGGHLTNRGIRTILNKIVERASLTVHVHPHKLRHTFATHLLNEGADLRSVQELLGHESLSSTQIYTHVTKDHLREAYMKSHPRANGNKS.

One can recognise a Core-binding (CB) domain in the interval 2-88; it reads NQLELYIDTF…TLRSFYRFLE (87 aa). Residues 109-294 form the Tyr recombinase domain; it reads PVPGFLYQEE…TKDHLREAYM (186 aa). Residues R149, K173, H246, R249, and H272 contribute to the active site. Y281 acts as the O-(3'-phospho-DNA)-tyrosine intermediate in catalysis.

Belongs to the 'phage' integrase family. XerC subfamily. In terms of assembly, forms a cyclic heterotetrameric complex composed of two molecules of XerC and two molecules of XerD.

The protein resides in the cytoplasm. Its function is as follows. Site-specific tyrosine recombinase, which acts by catalyzing the cutting and rejoining of the recombining DNA molecules. The XerC-XerD complex is essential to convert dimers of the bacterial chromosome into monomers to permit their segregation at cell division. It also contributes to the segregational stability of plasmids. This is Tyrosine recombinase XerC from Oceanobacillus iheyensis (strain DSM 14371 / CIP 107618 / JCM 11309 / KCTC 3954 / HTE831).